Here is a 284-residue protein sequence, read N- to C-terminus: MASPARVKRSLPDLTHPELTSSGAPLVMVTAYDYPGARHAEAAGVDLILVGDSLGNVVLGYDSTAPVTLADMIHHGKAVRRGAPNTFLVVDLPFGTYHAGVTDAMRHAVRVIQETGADAVKMEGSTPEVLDVVRVLSRNGVPVMGHVGLMPQTAAAQGGLRVQGKDDDSARRTLEGAVALQEAGAFAVVLEAIPARLARLISERLSVATIGIGAGVHCDGQVLVYHDLLGLYEGEEKKIAKRYADLGREAREAIAHYAAEVRAREFPSKDNSFVMKDEVLDKLY.

The Mg(2+) site is built by Asp52 and Asp91. 3-methyl-2-oxobutanoate contacts are provided by residues 52 to 53 (DS), Asp91, and Lys121. Glu123 contacts Mg(2+). The Proton acceptor role is filled by Glu191.

This sequence belongs to the PanB family. In terms of assembly, homodecamer; pentamer of dimers. Mg(2+) is required as a cofactor.

The protein localises to the cytoplasm. The enzyme catalyses 3-methyl-2-oxobutanoate + (6R)-5,10-methylene-5,6,7,8-tetrahydrofolate + H2O = 2-dehydropantoate + (6S)-5,6,7,8-tetrahydrofolate. Its pathway is cofactor biosynthesis; (R)-pantothenate biosynthesis; (R)-pantoate from 3-methyl-2-oxobutanoate: step 1/2. Catalyzes the reversible reaction in which hydroxymethyl group from 5,10-methylenetetrahydrofolate is transferred onto alpha-ketoisovalerate to form ketopantoate. The chain is 3-methyl-2-oxobutanoate hydroxymethyltransferase from Deinococcus radiodurans (strain ATCC 13939 / DSM 20539 / JCM 16871 / CCUG 27074 / LMG 4051 / NBRC 15346 / NCIMB 9279 / VKM B-1422 / R1).